The chain runs to 317 residues: ADP-L-glycero-D-manno-heptose-6-epimerase (317 aa).

NADP(+) is bound by residues 10-11 (FI), 31-32 (DD), K38, K53, 75-79 (QGACS), and N92. Residue Y139 is the Proton acceptor of the active site. K143 contributes to the NADP(+) binding site. N166 is a binding site for substrate. V167 and K175 together coordinate NADP(+). K175 serves as the catalytic Proton acceptor. Residues G177, H184, 198 to 201 (FQGH), R211, and Y275 each bind substrate.

This sequence belongs to the NAD(P)-dependent epimerase/dehydratase family. HldD subfamily. As to quaternary structure, homopentamer. The cofactor is NADP(+).

The enzyme catalyses ADP-D-glycero-beta-D-manno-heptose = ADP-L-glycero-beta-D-manno-heptose. It participates in nucleotide-sugar biosynthesis; ADP-L-glycero-beta-D-manno-heptose biosynthesis; ADP-L-glycero-beta-D-manno-heptose from D-glycero-beta-D-manno-heptose 7-phosphate: step 4/4. Its function is as follows. Catalyzes the interconversion between ADP-D-glycero-beta-D-manno-heptose and ADP-L-glycero-beta-D-manno-heptose via an epimerization at carbon 6 of the heptose. In Shewanella loihica (strain ATCC BAA-1088 / PV-4), this protein is ADP-L-glycero-D-manno-heptose-6-epimerase.